Reading from the N-terminus, the 144-residue chain is Large ribosomal subunit protein uL15 (144 aa).

The segment at M1–G52 is disordered. A compositionally biased stretch (gly residues) spans R21–S31.

It belongs to the universal ribosomal protein uL15 family. Part of the 50S ribosomal subunit.

Its function is as follows. Binds to the 23S rRNA. This chain is Large ribosomal subunit protein uL15, found in Buchnera aphidicola subsp. Acyrthosiphon pisum (strain 5A).